Reading from the N-terminus, the 147-residue chain is Heavy metal-dependent transcription regulator 1 (147 aa).

Positions 1–70 constitute an HTH merR-type domain; that stretch reads MNIGQASKVV…VEQIKDLLAL (70 aa). The H-T-H motif DNA-binding region spans 3–22; sequence IGQASKVVSGVSSKMIRYYE.

Its subcellular location is the cytoplasm. Its function is as follows. Transcriptional regulator involved in acid tolerance. Binds copper. This chain is Heavy metal-dependent transcription regulator 1 (hmrR1), found in Rhizobium meliloti (strain 1021) (Ensifer meliloti).